Reading from the N-terminus, the 837-residue chain is Protein translocase subunit SecA (837 aa).

Residues glutamine 85, 103–107 (GEGKT), and aspartate 493 each bind ATP. 4 residues coordinate Zn(2+): cysteine 821, cysteine 823, cysteine 832, and histidine 833.

The protein belongs to the SecA family. Monomer and homodimer. Part of the essential Sec protein translocation apparatus which comprises SecA, SecYEG and auxiliary proteins SecDF. Other proteins may also be involved. Zn(2+) is required as a cofactor.

The protein resides in the cell membrane. It localises to the cytoplasm. The catalysed reaction is ATP + H2O + cellular proteinSide 1 = ADP + phosphate + cellular proteinSide 2.. Part of the Sec protein translocase complex. Interacts with the SecYEG preprotein conducting channel. Has a central role in coupling the hydrolysis of ATP to the transfer of proteins into and across the cell membrane, serving as an ATP-driven molecular motor driving the stepwise translocation of polypeptide chains across the membrane. The sequence is that of Protein translocase subunit SecA from Streptococcus pneumoniae (strain Taiwan19F-14).